The sequence spans 157 residues: Protein NrdI (157 aa).

The protein belongs to the NrdI family.

In terms of biological role, probably involved in ribonucleotide reductase function. This is Protein NrdI from Mycoplasma mycoides subsp. mycoides SC (strain CCUG 32753 / NCTC 10114 / PG1).